Here is a 216-residue protein sequence, read N- to C-terminus: Protein-L-isoaspartate O-methyltransferase (216 aa).

Residue Ser60 is part of the active site.

It belongs to the methyltransferase superfamily. L-isoaspartyl/D-aspartyl protein methyltransferase family.

It is found in the cytoplasm. It catalyses the reaction [protein]-L-isoaspartate + S-adenosyl-L-methionine = [protein]-L-isoaspartate alpha-methyl ester + S-adenosyl-L-homocysteine. Functionally, catalyzes the methyl esterification of L-isoaspartyl residues in peptides and proteins that result from spontaneous decomposition of normal L-aspartyl and L-asparaginyl residues. It plays a role in the repair and/or degradation of damaged proteins. This is Protein-L-isoaspartate O-methyltransferase from Methanococcus aeolicus (strain ATCC BAA-1280 / DSM 17508 / OCM 812 / Nankai-3).